Consider the following 178-residue polypeptide: ATP synthase subunit delta (178 aa).

Belongs to the ATPase delta chain family. F-type ATPases have 2 components, F(1) - the catalytic core - and F(0) - the membrane proton channel. F(1) has five subunits: alpha(3), beta(3), gamma(1), delta(1), epsilon(1). F(0) has three main subunits: a(1), b(2) and c(10-14). The alpha and beta chains form an alternating ring which encloses part of the gamma chain. F(1) is attached to F(0) by a central stalk formed by the gamma and epsilon chains, while a peripheral stalk is formed by the delta and b chains.

It localises to the cell inner membrane. Its function is as follows. F(1)F(0) ATP synthase produces ATP from ADP in the presence of a proton or sodium gradient. F-type ATPases consist of two structural domains, F(1) containing the extramembraneous catalytic core and F(0) containing the membrane proton channel, linked together by a central stalk and a peripheral stalk. During catalysis, ATP synthesis in the catalytic domain of F(1) is coupled via a rotary mechanism of the central stalk subunits to proton translocation. This protein is part of the stalk that links CF(0) to CF(1). It either transmits conformational changes from CF(0) to CF(1) or is implicated in proton conduction. The protein is ATP synthase subunit delta of Pseudomonas syringae pv. syringae (strain B728a).